A 621-amino-acid chain; its full sequence is MARLPTTELRKYLLTGQFTRRGCLHLRPSPLAPPIPPLRTLSTTPPTPSDQQPQIIPLRKQLKDQAKAAKLSGSPKKKLKKSDNQTVPGWDLTVGIEIHAQLNTPSKLFSPASTPSSSSDDAVHHHHPNTHVAPFDLAIPGSQPSFQPTTLIPAIRAALALNCHIEPISRFDRKHYFHWDQPSGYQITQYYHPFARSGSVTLYPRDGIAAEDGEQVTVGIKQLQMEQDTAKTLAQPNSTHYLDFNRVGVPLVEIITEPCIHRPATAAAFVRKVQMLLKSVDACTSGLEQGGLRADVNVSVKRTGEEELGTRTEIKNLSSFKAVEDAIIAERDRQIRVLEEGGRIEGETRGWSLGSMETRRLRGKEGEVDYRYMPDPDLGPVVIGGDLVERLGETMGMLPDEEVGVLMGRFGLSERDAMALMLMEGRLEYFYGVLEELERMLGVEAVEGGEQRHAMLAANWCLHELGKLAEAEEVGEAAAEEVTSQVPEQDLAAILFYLHQKKVTAKVAKDLLWDVFRGTIATGGVTEQIDSQDLWYKEITEADYAAIADEVIEGQEKVLQDFLKFKQGKSKAYPQGKLGFLVGKMMRAGPEQGKGMDPASAERVMRVRIEQVYLPRLEDAQ.

Residues 1–41 (MARLPTTELRKYLLTGQFTRRGCLHLRPSPLAPPIPPLRTL) constitute a mitochondrion transit peptide. Disordered regions lie at residues 26-86 (LRPS…DNQT) and 106-136 (SKLFSPASTPSSSSDDAVHHHHPNTHVAPFD). Composition is skewed to low complexity over residues 38-57 (LRTLSTTPPTPSDQQPQIIP) and 110-120 (SPASTPSSSSD).

It belongs to the GatB/GatE family. GatB subfamily. As to quaternary structure, subunit of the heterotrimeric GatCAB amidotransferase (AdT) complex, composed of A, B and C subunits.

Its subcellular location is the mitochondrion. The catalysed reaction is L-glutamyl-tRNA(Gln) + L-glutamine + ATP + H2O = L-glutaminyl-tRNA(Gln) + L-glutamate + ADP + phosphate + H(+). Functionally, allows the formation of correctly charged Gln-tRNA(Gln) through the transamidation of misacylated Glu-tRNA(Gln) in the mitochondria. The reaction takes place in the presence of glutamine and ATP through an activated gamma-phospho-Glu-tRNA(Gln). The chain is Glutamyl-tRNA(Gln) amidotransferase subunit B, mitochondrial from Podospora anserina (strain S / ATCC MYA-4624 / DSM 980 / FGSC 10383) (Pleurage anserina).